A 351-amino-acid polypeptide reads, in one-letter code: NAD-dependent protein deacetylase SIR2rp1 (351 aa).

One can recognise a Deacetylase sirtuin-type domain in the interval 10–325 (HVVGEPTFEG…RSFAQALGFG (316 aa)). Residues 37–57 (GAGI…TGLY) and 122–125 (QNID) each bind NAD(+). Residue His-142 is the Proton acceptor of the active site. Positions 150, 153, 174, and 177 each coordinate Zn(2+). NAD(+) is bound by residues 213 to 215 (GTS) and 238 to 240 (NLE). Positions 260 to 284 (SSYRLSTGNGNGSKISSGDSSNSSS) are disordered. Over residues 265 to 284 (STGNGNGSKISSGDSSNSSS) the composition is skewed to low complexity. Cys-311 contacts NAD(+).

It belongs to the sirtuin family. Class I subfamily. Zn(2+) is required as a cofactor.

The protein resides in the nucleus. Its subcellular location is the chromosome. It localises to the telomere. It catalyses the reaction N(6)-acetyl-L-lysyl-[protein] + NAD(+) + H2O = 2''-O-acetyl-ADP-D-ribose + nicotinamide + L-lysyl-[protein]. Its function is as follows. NAD-dependent protein deacetylase, which is involved in repression of RNA polymerase I-mediated expression immediately adjacent to telomeres. It is however not involved in antigenic variation and subtelomeric variant surface glycoprotein (VSG) gene silencing. Plays a role in DNA damage response. Also has ADP-ribosylation activity in vitro. This is NAD-dependent protein deacetylase SIR2rp1 (SIR2rp1) from Trypanosoma brucei brucei (strain 927/4 GUTat10.1).